We begin with the raw amino-acid sequence, 114 residues long: UPF0339 protein PM0519 (114 aa).

2 tandem repeats follow at residues 11-59 (AKDG…NFEV) and 62-110 (AKND…IKDL).

The protein belongs to the UPF0339 family. Duplicated subfamily.

This chain is UPF0339 protein PM0519, found in Pasteurella multocida (strain Pm70).